Here is a 321-residue protein sequence, read N- to C-terminus: tRNA-dihydrouridine synthase B (321 aa).

Residues 16–18 (PMA) and Gln70 contribute to the FMN site. Cys100 functions as the Proton donor in the catalytic mechanism. FMN contacts are provided by residues Lys139, 200-202 (NGD), and 224-225 (GR).

This sequence belongs to the Dus family. DusB subfamily. FMN is required as a cofactor.

The catalysed reaction is a 5,6-dihydrouridine in tRNA + NAD(+) = a uridine in tRNA + NADH + H(+). It carries out the reaction a 5,6-dihydrouridine in tRNA + NADP(+) = a uridine in tRNA + NADPH + H(+). Catalyzes the synthesis of 5,6-dihydrouridine (D), a modified base found in the D-loop of most tRNAs, via the reduction of the C5-C6 double bond in target uridines. In Shigella flexneri, this protein is tRNA-dihydrouridine synthase B.